We begin with the raw amino-acid sequence, 297 residues long: Halorhodopsin (297 aa).

Residues 1-31 (MRSRTYHDQSVCGPYGSQRTDCDRDTDAGSD) are disordered. Residues 1–45 (MRSRTYHDQSVCGPYGSQRTDCDRDTDAGSDTDVHGAQVATQIRT) are Extracellular-facing. The helical transmembrane segment at 46-71 (DTLLHSSLWVNIALAGLSILVFLYMA) threads the bilayer. Over 72-77 (RTVRAN) the chain is Cytoplasmic. Residues 78–101 (RARLIVGATLMIPLVSLSSYLGLV) form a helical membrane-spanning segment. Over 102 to 125 (TGLTAGPIEMPAAHALAGEDVLSQ) the chain is Extracellular. A helical transmembrane segment spans residues 126-147 (WGRYLTWTLSTPMILLALGWLA). The Cytoplasmic portion of the chain corresponds to 148–150 (EVD). The helical transmembrane segment at 151–174 (TADLFVVIAADIGMCLTGLAAALT) threads the bilayer. At 175–177 (TSS) the chain is on the extracellular side. A helical membrane pass occupies residues 178–200 (YAFRWAFYLVSTAFFVVVLYALL). The Cytoplasmic segment spans residues 201–212 (AKWPTNAEAAGT). Residues 213–236 (GDIFGTLRWLTVILWLGYPILWAL) form a helical membrane-spanning segment. At 237-246 (GVEGFALVDS) the chain is on the extracellular side. A helical membrane pass occupies residues 247-275 (VGLTSWGYSLLDIGAKYLFAALLLRWVAN). Lysine 262 is modified (N6-(retinylidene)lysine). Residues 276 to 297 (NERTIAVGQRSGRGAIGDPVED) are Cytoplasmic-facing.

The protein belongs to the archaeal/bacterial/fungal opsin family.

It is found in the cell membrane. In terms of biological role, light-driven chloride pump. This chain is Halorhodopsin (hop), found in Haloterrigena sp. (strain arg-4).